A 741-amino-acid polypeptide reads, in one-letter code: Phosphoribosylformylglycinamidine synthase subunit PurL (741 aa).

The active site involves His53. Positions 56 and 95 each coordinate ATP. Glu97 contacts Mg(2+). Residues Ser98–His101 and Arg120 contribute to the substrate site. Catalysis depends on His99, which acts as the Proton acceptor. Asp121 lines the Mg(2+) pocket. Residue Gln244 coordinates substrate. Asp274 is a Mg(2+) binding site. Glu318–Gln320 lines the substrate pocket. Asp501 and Gly538 together coordinate ATP. Residue Asn539 participates in Mg(2+) binding. Residue Ser541 participates in substrate binding.

Belongs to the FGAMS family. In terms of assembly, monomer. Part of the FGAM synthase complex composed of 1 PurL, 1 PurQ and 2 PurS subunits.

It localises to the cytoplasm. It carries out the reaction N(2)-formyl-N(1)-(5-phospho-beta-D-ribosyl)glycinamide + L-glutamine + ATP + H2O = 2-formamido-N(1)-(5-O-phospho-beta-D-ribosyl)acetamidine + L-glutamate + ADP + phosphate + H(+). It participates in purine metabolism; IMP biosynthesis via de novo pathway; 5-amino-1-(5-phospho-D-ribosyl)imidazole from N(2)-formyl-N(1)-(5-phospho-D-ribosyl)glycinamide: step 1/2. Part of the phosphoribosylformylglycinamidine synthase complex involved in the purines biosynthetic pathway. Catalyzes the ATP-dependent conversion of formylglycinamide ribonucleotide (FGAR) and glutamine to yield formylglycinamidine ribonucleotide (FGAM) and glutamate. The FGAM synthase complex is composed of three subunits. PurQ produces an ammonia molecule by converting glutamine to glutamate. PurL transfers the ammonia molecule to FGAR to form FGAM in an ATP-dependent manner. PurS interacts with PurQ and PurL and is thought to assist in the transfer of the ammonia molecule from PurQ to PurL. The chain is Phosphoribosylformylglycinamidine synthase subunit PurL from Ligilactobacillus salivarius (strain UCC118) (Lactobacillus salivarius).